Here is a 393-residue protein sequence, read N- to C-terminus: Lipid-A-disaccharide synthase (393 aa).

It belongs to the LpxB family.

The enzyme catalyses a lipid X + a UDP-2-N,3-O-bis[(3R)-3-hydroxyacyl]-alpha-D-glucosamine = a lipid A disaccharide + UDP + H(+). Its pathway is bacterial outer membrane biogenesis; LPS lipid A biosynthesis. Condensation of UDP-2,3-diacylglucosamine and 2,3-diacylglucosamine-1-phosphate to form lipid A disaccharide, a precursor of lipid A, a phosphorylated glycolipid that anchors the lipopolysaccharide to the outer membrane of the cell. The polypeptide is Lipid-A-disaccharide synthase (Rhodopseudomonas palustris (strain ATCC BAA-98 / CGA009)).